A 260-amino-acid polypeptide reads, in one-letter code: Putative hydro-lyase Bmul_5125/BMULJ_03391 (260 aa).

This sequence belongs to the D-glutamate cyclase family.

The protein is Putative hydro-lyase Bmul_5125/BMULJ_03391 of Burkholderia multivorans (strain ATCC 17616 / 249).